Consider the following 194-residue polypeptide: Protein GrpE (194 aa).

Residues 1 to 13 are compositionally biased toward polar residues; sequence MENTQENPTSQNP. The segment at 1–50 is disordered; that stretch reads MENTQENPTSQNPKPAEETARQAAEAAAPQQEAAANAATDSPASAEQAAL. A compositionally biased stretch (low complexity) spans 21-50; that stretch reads RQAAEAAAPQQEAAANAATDSPASAEQAAL.

Belongs to the GrpE family. In terms of assembly, homodimer.

It is found in the cytoplasm. In terms of biological role, participates actively in the response to hyperosmotic and heat shock by preventing the aggregation of stress-denatured proteins, in association with DnaK and GrpE. It is the nucleotide exchange factor for DnaK and may function as a thermosensor. Unfolded proteins bind initially to DnaJ; upon interaction with the DnaJ-bound protein, DnaK hydrolyzes its bound ATP, resulting in the formation of a stable complex. GrpE releases ADP from DnaK; ATP binding to DnaK triggers the release of the substrate protein, thus completing the reaction cycle. Several rounds of ATP-dependent interactions between DnaJ, DnaK and GrpE are required for fully efficient folding. This is Protein GrpE from Paraburkholderia xenovorans (strain LB400).